A 284-amino-acid chain; its full sequence is Bifunctional protein FolD (284 aa).

NADP(+)-binding positions include 163 to 165 (GAS), Ile188, and Ile229.

Belongs to the tetrahydrofolate dehydrogenase/cyclohydrolase family. As to quaternary structure, homodimer.

The enzyme catalyses (6R)-5,10-methylene-5,6,7,8-tetrahydrofolate + NADP(+) = (6R)-5,10-methenyltetrahydrofolate + NADPH. The catalysed reaction is (6R)-5,10-methenyltetrahydrofolate + H2O = (6R)-10-formyltetrahydrofolate + H(+). Its pathway is one-carbon metabolism; tetrahydrofolate interconversion. Its function is as follows. Catalyzes the oxidation of 5,10-methylenetetrahydrofolate to 5,10-methenyltetrahydrofolate and then the hydrolysis of 5,10-methenyltetrahydrofolate to 10-formyltetrahydrofolate. The chain is Bifunctional protein FolD from Nautilia profundicola (strain ATCC BAA-1463 / DSM 18972 / AmH).